The sequence spans 784 residues: DNA ligase (784 aa).

Residues 31 to 35 (DAEYD), 80 to 81 (SL), and glutamate 120 contribute to the NAD(+) site. The active-site N6-AMP-lysine intermediate is the lysine 122. Residues arginine 143, glutamate 180, lysine 296, and lysine 320 each coordinate NAD(+). The Zn(2+) site is built by cysteine 414, cysteine 417, cysteine 444, and cysteine 450. Residues 701 to 784 (AEGLPLAGQT…AFMAEQGITL (84 aa)) enclose the BRCT domain.

The protein belongs to the NAD-dependent DNA ligase family. LigA subfamily. Requires Mg(2+) as cofactor. The cofactor is Mn(2+).

The enzyme catalyses NAD(+) + (deoxyribonucleotide)n-3'-hydroxyl + 5'-phospho-(deoxyribonucleotide)m = (deoxyribonucleotide)n+m + AMP + beta-nicotinamide D-nucleotide.. Its function is as follows. DNA ligase that catalyzes the formation of phosphodiester linkages between 5'-phosphoryl and 3'-hydroxyl groups in double-stranded DNA using NAD as a coenzyme and as the energy source for the reaction. It is essential for DNA replication and repair of damaged DNA. The chain is DNA ligase from Pseudomonas entomophila (strain L48).